The sequence spans 343 residues: Heat-inducible transcription repressor HrcA (343 aa).

Belongs to the HrcA family.

Functionally, negative regulator of class I heat shock genes (grpE-dnaK-dnaJ and groELS operons). Prevents heat-shock induction of these operons. The chain is Heat-inducible transcription repressor HrcA from Thermoanaerobacter pseudethanolicus (strain ATCC 33223 / 39E) (Clostridium thermohydrosulfuricum).